Consider the following 160-residue polypeptide: Nucleotide-binding protein VV1_2655 (160 aa).

This sequence belongs to the YajQ family.

Its function is as follows. Nucleotide-binding protein. This chain is Nucleotide-binding protein VV1_2655, found in Vibrio vulnificus (strain CMCP6).